A 117-amino-acid chain; its full sequence is Large ribosomal subunit protein uL23 (117 aa).

The protein belongs to the universal ribosomal protein uL23 family. Part of the 50S ribosomal subunit. Contacts protein L29, and trigger factor when it is bound to the ribosome.

In terms of biological role, one of the early assembly proteins it binds 23S rRNA. One of the proteins that surrounds the polypeptide exit tunnel on the outside of the ribosome. Forms the main docking site for trigger factor binding to the ribosome. The polypeptide is Large ribosomal subunit protein uL23 (Acetivibrio thermocellus (strain ATCC 27405 / DSM 1237 / JCM 9322 / NBRC 103400 / NCIMB 10682 / NRRL B-4536 / VPI 7372) (Clostridium thermocellum)).